A 433-amino-acid polypeptide reads, in one-letter code: Enolase (433 aa).

Gln163 contacts (2R)-2-phosphoglycerate. The active-site Proton donor is the Glu205. 3 residues coordinate Mg(2+): Asp242, Glu285, and Asp312. (2R)-2-phosphoglycerate is bound by residues Lys337, Arg366, Ser367, and Lys388. The Proton acceptor role is filled by Lys337.

The protein belongs to the enolase family. Mg(2+) serves as cofactor.

The protein localises to the cytoplasm. Its subcellular location is the secreted. It localises to the cell surface. The enzyme catalyses (2R)-2-phosphoglycerate = phosphoenolpyruvate + H2O. It participates in carbohydrate degradation; glycolysis; pyruvate from D-glyceraldehyde 3-phosphate: step 4/5. Catalyzes the reversible conversion of 2-phosphoglycerate (2-PG) into phosphoenolpyruvate (PEP). It is essential for the degradation of carbohydrates via glycolysis. The protein is Enolase of Lawsonia intracellularis (strain PHE/MN1-00).